The primary structure comprises 622 residues: FERM domain-containing protein 6 (622 aa).

One can recognise an FERM domain in the interval 16 to 328; it reads RSVCIFLPND…NSHRLYMNLQ (313 aa). Residues 364–445 form a disordered region; that stretch reads KRSRASGSSA…SGVESGGKDR (82 aa). Composition is skewed to low complexity over residues 384–395 and 425–438; these read HSTASHSSSHTS and SSMT…TSGV. Phosphoserine is present on Ser522. A Phosphothreonine modification is found at Thr523. Phosphoserine occurs at positions 525, 542, and 544.

The protein resides in the cytoplasm. It is found in the cell membrane. The protein is FERM domain-containing protein 6 (FRMD6) of Homo sapiens (Human).